The primary structure comprises 361 residues: Peptide chain release factor 1 (361 aa).

Gln235 carries the post-translational modification N5-methylglutamine.

It belongs to the prokaryotic/mitochondrial release factor family. Post-translationally, methylated by PrmC. Methylation increases the termination efficiency of RF1.

It is found in the cytoplasm. Its function is as follows. Peptide chain release factor 1 directs the termination of translation in response to the peptide chain termination codons UAG and UAA. This is Peptide chain release factor 1 from Xanthomonas oryzae pv. oryzae (strain MAFF 311018).